Here is a 775-residue protein sequence, read N- to C-terminus: Kojibiose phosphorylase (775 aa).

361–362 (WD) is a substrate binding site. The active-site Proton donor is Glu501. A substrate-binding site is contributed by 614–615 (KQ).

This sequence belongs to the glycosyl hydrolase 65 family. In terms of assembly, homohexamer.

The enzyme catalyses kojibiose + phosphate = beta-D-glucose 1-phosphate + D-glucose. Inhibited by Hg(2+) and Pb(2+). In terms of biological role, catalyzes the reversible phosphorolysis of kojibiose into beta-D-glucose 1-phosphate (Glc1P) and D-glucose. Can act with alpha-1,2-oligoglucans, such as selaginose, but more slowly. Inactive when disaccharides with linkages other than alpha-1,2 linkages, such as sophorose, trehalose, neotrehalose, nigerose, laminaribiose, maltose, cellobiose, isomaltose, gentiobiose, sucrose and lactose, are used as substrates. In contrast, shows broad specificity for the reverse reaction. Various monosaccharides and disaccharides having a glucosyl residue at the non-reducing end are effective acceptors. The polypeptide is Kojibiose phosphorylase (Thermoanaerobacter brockii (Thermoanaerobium brockii)).